The sequence spans 244 residues: uncharacterized protein (244 aa).

Residues 1–17 form the signal peptide; the sequence is MVLHVITALLSIGLCYG.

Component of the acid-soluble and acid-insoluble organic matrix of prismatic shell layers (at protein level).

It localises to the secreted. This is an uncharacterized protein from Haliotis asinina (Donkey's ear abalone).